Reading from the N-terminus, the 413-residue chain is Multifunctional CCA protein (413 aa).

The ATP site is built by Gly8 and Arg11. 2 residues coordinate CTP: Gly8 and Arg11. Asp21 and Asp23 together coordinate Mg(2+). ATP is bound by residues Arg91, Arg143, and Arg146. The CTP site is built by Arg91, Arg143, and Arg146. One can recognise an HD domain in the interval 232–333 (TGVHVMMVVD…VRLFERSDAL (102 aa)).

It belongs to the tRNA nucleotidyltransferase/poly(A) polymerase family. Bacterial CCA-adding enzyme type 1 subfamily. As to quaternary structure, monomer. Can also form homodimers and oligomers. Mg(2+) is required as a cofactor. Requires Ni(2+) as cofactor.

The catalysed reaction is a tRNA precursor + 2 CTP + ATP = a tRNA with a 3' CCA end + 3 diphosphate. The enzyme catalyses a tRNA with a 3' CCA end + 2 CTP + ATP = a tRNA with a 3' CCACCA end + 3 diphosphate. Functionally, catalyzes the addition and repair of the essential 3'-terminal CCA sequence in tRNAs without using a nucleic acid template. Adds these three nucleotides in the order of C, C, and A to the tRNA nucleotide-73, using CTP and ATP as substrates and producing inorganic pyrophosphate. tRNA 3'-terminal CCA addition is required both for tRNA processing and repair. Also involved in tRNA surveillance by mediating tandem CCA addition to generate a CCACCA at the 3' terminus of unstable tRNAs. While stable tRNAs receive only 3'-terminal CCA, unstable tRNAs are marked with CCACCA and rapidly degraded. This is Multifunctional CCA protein from Burkholderia lata (strain ATCC 17760 / DSM 23089 / LMG 22485 / NCIMB 9086 / R18194 / 383).